The following is a 418-amino-acid chain: Secernin-3 (418 aa).

The propeptide occupies 1–5 (MEPYS). The active site involves C6. Glyoxylic acid (Cys); alternate is present on C6. C6 carries the post-translational modification Pyruvic acid (Cys); alternate.

This sequence belongs to the peptidase C69 family. Secernin subfamily.

Its function is as follows. Plays a role in thermal nociception. The chain is Secernin-3 (Scrn3) from Mus musculus (Mouse).